Consider the following 253-residue polypeptide: MRELKVVGLDADGKNIICQGAIPSEQFKLPVDDRLRAALRDDSVQPEQAQLDIEVTNVLSPKEIQARIRAGASVEQVAAASGSDIARIRRFAHPVLLERSRAAELATAAHPVLADGPAVLTMQETVAAALVARGLNPDSLTWDAWRNEDSRWTVQLAWKAGRSDNLAHFRFTPGAHGGTATAIDDTAHELINPTFNRPLRPLAPVAHLDFDEPEPAQPTLTVPSAQPVSNRRGKPAIPAWEDVLLGVRSGGRR.

The interval 211–235 is disordered; that stretch reads DEPEPAQPTLTVPSAQPVSNRRGKP. Residues 218 to 229 show a composition bias toward polar residues; that stretch reads PTLTVPSAQPVS.

This is an uncharacterized protein from Mycobacterium tuberculosis (strain CDC 1551 / Oshkosh).